We begin with the raw amino-acid sequence, 283 residues long: GTPase Era (283 aa).

Residues 7-175 form the Era-type G domain; sequence YCGHVIIVGK…KNIIKSYLPE (169 aa). Residues 15–22 are G1; it reads GKANVGKS. Residue 15-22 coordinates GTP; sequence GKANVGKS. A G2 region spans residues 41–45; it reads NTTQS. A G3 region spans residues 62-65; that stretch reads DTPG. Residues 62 to 66 and 124 to 127 contribute to the GTP site; these read DTPGV and NKID. The tract at residues 124-127 is G4; it reads NKID. Positions 154-156 are G5; the sequence is ISA. One can recognise a KH type-2 domain in the interval 198 to 283; the sequence is IREQLILFLG…HLVLWVKDKN (86 aa).

Belongs to the TRAFAC class TrmE-Era-EngA-EngB-Septin-like GTPase superfamily. Era GTPase family. Monomer.

Its subcellular location is the cytoplasm. The protein resides in the cell membrane. An essential GTPase that binds both GDP and GTP, with rapid nucleotide exchange. Plays a role in 16S rRNA processing and 30S ribosomal subunit biogenesis and possibly also in cell cycle regulation and energy metabolism. This is GTPase Era from Buchnera aphidicola subsp. Acyrthosiphon pisum (strain APS) (Acyrthosiphon pisum symbiotic bacterium).